Consider the following 172-residue polypeptide: Adenine phosphoribosyltransferase (172 aa).

This sequence belongs to the purine/pyrimidine phosphoribosyltransferase family. In terms of assembly, homodimer.

The protein resides in the cytoplasm. It carries out the reaction AMP + diphosphate = 5-phospho-alpha-D-ribose 1-diphosphate + adenine. It functions in the pathway purine metabolism; AMP biosynthesis via salvage pathway; AMP from adenine: step 1/1. Catalyzes a salvage reaction resulting in the formation of AMP, that is energically less costly than de novo synthesis. This is Adenine phosphoribosyltransferase from Streptococcus pyogenes serotype M12 (strain MGAS9429).